The following is a 245-amino-acid chain: Large ribosomal subunit protein uL29m (245 aa).

2 stretches are compositionally biased toward low complexity: residues 36 to 49 and 234 to 245; these read SFNS…TSSS and STKSETTTSKNI. Disordered regions lie at residues 36-98 and 207-245; these read SFNS…NPDH and RPSP…SKNI.

The protein belongs to the universal ribosomal protein uL29 family. In terms of assembly, component of the mitochondrial large ribosomal subunit. Mature mitochondrial ribosomes consist of a small (37S) and a large (54S) subunit. The 37S subunit contains at least 33 different proteins and 1 molecule of RNA (15S). The 54S subunit contains at least 45 different proteins and 1 molecule of RNA (21S).

The protein resides in the mitochondrion. The protein is Large ribosomal subunit protein uL29m (MRPL4) of Coccidioides immitis (strain RS) (Valley fever fungus).